Here is a 155-residue protein sequence, read N- to C-terminus: Small ribosomal subunit protein uS7c (155 aa).

This sequence belongs to the universal ribosomal protein uS7 family. Part of the 30S ribosomal subunit.

The protein resides in the plastid. Its subcellular location is the chloroplast. One of the primary rRNA binding proteins, it binds directly to 16S rRNA where it nucleates assembly of the head domain of the 30S subunit. The protein is Small ribosomal subunit protein uS7c (rps7) of Hydrastis canadensis (Goldenseal).